The following is a 445-amino-acid chain: Eukaryotic translation initiation factor 3 subunit E (445 aa).

The 174-residue stretch at 230–403 (FFNHVKGRDL…GHVVMGAQPL (174 aa)) folds into the PCI domain.

The protein belongs to the eIF-3 subunit E family. As to quaternary structure, component of the eukaryotic translation initiation factor 3 (eIF-3) complex.

Its subcellular location is the cytoplasm. Functionally, component of the eukaryotic translation initiation factor 3 (eIF-3) complex, which is involved in protein synthesis of a specialized repertoire of mRNAs and, together with other initiation factors, stimulates binding of mRNA and methionyl-tRNAi to the 40S ribosome. The eIF-3 complex specifically targets and initiates translation of a subset of mRNAs involved in cell proliferation. The polypeptide is Eukaryotic translation initiation factor 3 subunit E (eIF3-S6) (Bombyx mori (Silk moth)).